The following is a 217-amino-acid chain: Peptide deformylase 1 (217 aa).

Fe cation contacts are provided by cysteine 129 and histidine 171. Residue glutamate 172 is part of the active site. Histidine 175 contributes to the Fe cation binding site.

It belongs to the polypeptide deformylase family. Fe(2+) is required as a cofactor.

The catalysed reaction is N-terminal N-formyl-L-methionyl-[peptide] + H2O = N-terminal L-methionyl-[peptide] + formate. Functionally, removes the formyl group from the N-terminal Met of newly synthesized proteins. Requires at least a dipeptide for an efficient rate of reaction. N-terminal L-methionine is a prerequisite for activity but the enzyme has broad specificity at other positions. This is Peptide deformylase 1 from Bifidobacterium longum (strain NCC 2705).